The following is a 395-amino-acid chain: Putative transcription factor 079L (395 aa).

Belongs to the IIV-6 282R family.

In terms of biological role, transcription activation. This Aedes vexans (Inland floodwater mosquito) protein is Putative transcription factor 079L.